Reading from the N-terminus, the 334-residue chain is uncharacterized protein (334 aa).

It belongs to the ADP-ribosylglycohydrolase family.

This is an uncharacterized protein from Escherichia coli (strain K12).